A 153-amino-acid polypeptide reads, in one-letter code: Transcriptional repressor NrdR (153 aa).

A zinc finger spans residues 3 to 34 (CPFCAHDDSQVKDSRPAEDNAAIRRRRQCSKC). Residues 49-139 (VTVVKSDDKR…VYRDFSEARD (91 aa)) enclose the ATP-cone domain.

It belongs to the NrdR family. Requires Zn(2+) as cofactor.

Its function is as follows. Negatively regulates transcription of bacterial ribonucleotide reductase nrd genes and operons by binding to NrdR-boxes. This chain is Transcriptional repressor NrdR, found in Erythrobacter litoralis (strain HTCC2594).